The following is a 406-amino-acid chain: Putative sodium-coupled neutral amino acid transporter 11 (406 aa).

At 1 to 7 the chain is on the cytoplasmic side; it reads MKQAGFP. Residues 8–28 form a helical membrane-spanning segment; that stretch reads LGILLLFWVSYVTDFSLVLLI. The N-linked (GlcNAc...) asparagine glycan is linked to N44. Helical transmembrane passes span 48-68, 93-113, 121-141, 156-176, 202-222, and 241-263; these read GFPGYLLLSVLQFLYPFIAMI, VFIGRHFIIGLSTVTFTLPLS, LGKVSLISTGLTTLILGIVMA, AWVFAKPNAIQAVGVMSFAFI, MSIVISVFICIFFATCGYLTF, and VTFGRFCYGVTVILTYPMECFVT. N-linked (GlcNAc...) asparagine glycosylation is present at N275. Transmembrane regions (helical) follow at residues 279-299, 301-321, and 340-360; these read VFHIVVTVMVITVATLVSLLI, CLGIVLELNGVLCATPLIFII, and IMSCVMLPIGAVVMVFGFVMA.

Belongs to the amino acid/polyamine transporter 2 family.

It localises to the membrane. Functionally, putative sodium-dependent amino acid/proton antiporter. The chain is Putative sodium-coupled neutral amino acid transporter 11 (SLC38A11) from Homo sapiens (Human).